Here is a 386-residue protein sequence, read N- to C-terminus: Glutamate 5-kinase (386 aa).

Lysine 28 lines the ATP pocket. Residues serine 68, aspartate 155, and asparagine 167 each contribute to the substrate site. 187-188 serves as a coordination point for ATP; sequence TD. Residues 294-372 enclose the PUA domain; that stretch reads RGRLVLDDGA…EKIESILGYI (79 aa).

Belongs to the glutamate 5-kinase family.

The protein localises to the cytoplasm. The enzyme catalyses L-glutamate + ATP = L-glutamyl 5-phosphate + ADP. It participates in amino-acid biosynthesis; L-proline biosynthesis; L-glutamate 5-semialdehyde from L-glutamate: step 1/2. Catalyzes the transfer of a phosphate group to glutamate to form L-glutamate 5-phosphate. The protein is Glutamate 5-kinase of Hahella chejuensis (strain KCTC 2396).